Reading from the N-terminus, the 78-residue chain is Large ribosomal subunit protein bL28 (78 aa).

A disordered region spans residues 1–20; the sequence is MSRVCQVTGKRPVTGNNRSH.

Belongs to the bacterial ribosomal protein bL28 family.

The sequence is that of Large ribosomal subunit protein bL28 from Vibrio parahaemolyticus serotype O3:K6 (strain RIMD 2210633).